A 203-amino-acid chain; its full sequence is FMN-dependent NADH:quinone oxidoreductase 1 (203 aa).

Residues Ser9, 15-17, 95-98, and 139-142 each bind FMN; these read SAS, MYNF, and TAGG.

The protein belongs to the azoreductase type 1 family. Homodimer. The cofactor is FMN.

It catalyses the reaction 2 a quinone + NADH + H(+) = 2 a 1,4-benzosemiquinone + NAD(+). It carries out the reaction N,N-dimethyl-1,4-phenylenediamine + anthranilate + 2 NAD(+) = 2-(4-dimethylaminophenyl)diazenylbenzoate + 2 NADH + 2 H(+). In terms of biological role, quinone reductase that provides resistance to thiol-specific stress caused by electrophilic quinones. Also exhibits azoreductase activity. Catalyzes the reductive cleavage of the azo bond in aromatic azo compounds to the corresponding amines. This Pseudomonas putida (strain ATCC 47054 / DSM 6125 / CFBP 8728 / NCIMB 11950 / KT2440) protein is FMN-dependent NADH:quinone oxidoreductase 1.